A 67-amino-acid polypeptide reads, in one-letter code: Conotoxin Cl6.8 (67 aa).

An N-terminal signal peptide occupies residues M1–A22. The propeptide occupies N23–S39. Cystine bridges form between C43–C58, C50–C62, and C57–C66. C66 carries the cysteine amide modification.

This sequence belongs to the conotoxin O1 superfamily. In terms of tissue distribution, expressed by the venom duct.

It localises to the secreted. The sequence is that of Conotoxin Cl6.8 from Californiconus californicus (California cone).